We begin with the raw amino-acid sequence, 388 residues long: T-cell surface glycoprotein CD1e, membrane-associated (388 aa).

The signal sequence occupies residues 1–19; it reads MLLLFLLFEGLCCPGENTA. The propeptide at 20-31 is removed in sCD1e; the sequence is APQALQSYHLAA. 2 N-linked (GlcNAc...) asparagine glycosylation sites follow: Asn47 and Asn84. The Ig-like domain maps to 191–301; the sequence is PRFLAGLMEA…LGGHDLIIHW (111 aa). Cysteines 230 and 285 form a disulfide. The chain crosses the membrane as a helical span at residues 305–325; that stretch reads SIFLILICLTVIVTLVILVVV.

In terms of assembly, heterodimer with B2M (beta-2-microglobulin). The association with B2M appears to be facilitated by the presence of the propeptide. Post-translationally, mono-ubiquitinated. In terms of processing, proteolytically cleaved in late endosomes to yield a soluble form. Expressed on cortical thymocytes, dendritic cells, Langerhans cells, on certain T-cell leukemias, and in various other tissues.

It is found in the golgi apparatus membrane. Its subcellular location is the early endosome. It localises to the late endosome. The protein localises to the lysosome lumen. In terms of biological role, T-cell surface glycoprotein CD1e, soluble binds diacetylated lipids, including phosphatidyl inositides and diacylated sulfoglycolipids, and is required for the presentation of glycolipid antigens on the cell surface. The membrane-associated form is not active. The sequence is that of T-cell surface glycoprotein CD1e, membrane-associated (CD1E) from Homo sapiens (Human).